Consider the following 387-residue polypeptide: WD repeat-containing protein 89 (387 aa).

WD repeat units follow at residues 21–65 (KEPT…VLRE), 68–107 (GYPG…EKPV), 112–156 (GYPS…QNLS), 168–208 (THSD…EEDA), 214–254 (NSIS…TDEP), and 319–358 (GHAA…KTFT).

The sequence is that of WD repeat-containing protein 89 (WDR89) from Homo sapiens (Human).